The chain runs to 295 residues: Protoheme IX farnesyltransferase (295 aa).

9 helical membrane-spanning segments follow: residues 24–44, 45–65, 94–114, 117–137, 144–164, 171–191, 216–236, 240–260, and 272–292; these read IMYL…GSMH, PFLA…AGAI, SALE…AIAV, ISAA…TIWL, NIVI…AAVT, SFIL…ALSL, KYIL…ALFL, LLYL…AVSV, and MFSY…FCSI.

This sequence belongs to the UbiA prenyltransferase family. Protoheme IX farnesyltransferase subfamily.

The protein localises to the cell membrane. The enzyme catalyses heme b + (2E,6E)-farnesyl diphosphate + H2O = Fe(II)-heme o + diphosphate. Its pathway is porphyrin-containing compound metabolism; heme O biosynthesis; heme O from protoheme: step 1/1. Converts heme B (protoheme IX) to heme O by substitution of the vinyl group on carbon 2 of heme B porphyrin ring with a hydroxyethyl farnesyl side group. This chain is Protoheme IX farnesyltransferase, found in Wolbachia pipientis wMel.